A 240-amino-acid chain; its full sequence is Thymidylate kinase (240 aa).

Position 10 to 17 (10 to 17 (GINGVGKS)) interacts with ATP.

Belongs to the thymidylate kinase family.

It carries out the reaction dTMP + ATP = dTDP + ADP. The protein operates within pyrimidine metabolism; dTTP biosynthesis. Its function is as follows. Catalyzes the conversion of dTMP to dTDP. This is Thymidylate kinase (TMK) from African swine fever virus (strain Badajoz 1971 Vero-adapted) (Ba71V).